The chain runs to 292 residues: MHPARPALWAAALTALTLLRGPPVARAGAGAVGAGPVVRCEPCDARALAQCAPPPTAPACTELVREPGCGCCLTCALREGDACGVYTERCGTGLRCQPRPAEQYPLKALLNGRGFCANASAASNLSAYLPSQPSPGNTTESEEDHNAGSVESQVVPSTHRVTDSKFHPLHSKMEVIIKGQARDSQRYKVDYESQSTDTQNFSSESKRETEYGPCRREMEDTLNHLKFLNVLSPRGVHIPNCDKKGFYKKKQCRPSKGRKRGFCWCVDKYGQPLPGYDTKGKDDVHCLSVQSQ.

The N-terminal stretch at 1–27 (MHPARPALWAAALTALTLLRGPPVARA) is a signal peptide. Residues 36 to 119 (PVVRCEPCDA…LNGRGFCANA (84 aa)) form the IGFBP N-terminal domain. Intrachain disulfides connect Cys40-Cys69, Cys43-Cys71, Cys51-Cys72, Cys60-Cys75, Cys83-Cys96, and Cys90-Cys116. 3 N-linked (GlcNAc...) asparagine glycosylation sites follow: Asn118, Asn124, and Asn137. 2 disordered regions span residues 127 to 161 (AYLP…THRV) and 191 to 211 (YESQ…ETEY). Polar residues predominate over residues 129-139 (LPSQPSPGNTT). Phosphoserine is present on Ser149. Positions 192–203 (ESQSTDTQNFSS) are enriched in polar residues. The N-linked (GlcNAc...) asparagine glycan is linked to Asn200. Ser202 carries the phosphoserine modification. Residues 211–286 (YGPCRREMED…DTKGKDDVHC (76 aa)) form the Thyroglobulin type-1 domain. 3 cysteine pairs are disulfide-bonded: Cys214–Cys241, Cys252–Cys263, and Cys265–Cys286.

Interacts with XLKD1. Binds IGF2 more than IGF1. Forms a ternary complex of about 140 to 150 kDa with IGF1 or IGF2 and a 85 kDa glycoprotein (ALS). Interacts with humanin; humanin competes with importin KPNB1 for binding to IGFBP3, blocking IGFBP3 nuclear import and IGFBP3-mediated apoptosis. Interacts with TMEM219. Interacts with RXRA; this interaction modulates the transcriptional activity of RXRA. Interacts with LRP1; this interaction mediates cell growth inhibition independent of IGF1. Post-translationally, phosphorylated by FAM20C in the extracellular medium. Phosphorylated by CK2; resulting in decreased nuclear localization.

The protein resides in the secreted. The protein localises to the nucleus. Multifunctional protein that plays a critical role in regulating the availability of IGFs such as IGF1 and IGF2 to their receptors and thereby regulates IGF-mediated cellular processes including proliferation, differentiation, and apoptosis in a cell-type specific manner. Also exhibits IGF-independent antiproliferative and apoptotic effects mediated by its receptor TMEM219/IGFBP-3R. Inhibits the positive effect of humanin on insulin sensitivity. Promotes testicular germ cell apoptosis. Acts via LRP-1/alpha2M receptor, also known as TGF-beta type V receptor, to mediate cell growth inhibition independent of IGF1. Mechanistically, induces serine-specific dephosphorylation of IRS1 or IRS2 upon ligation to its receptor, leading to the inhibitory cascade. In the nucleus, interacts with transcription factors such as retinoid X receptor-alpha/RXRA to regulate transcriptional signaling and apoptosis. This is Insulin-like growth factor-binding protein 3 (Igfbp3) from Rattus norvegicus (Rat).